Consider the following 407-residue polypeptide: Chorismate synthase (407 aa).

NADP(+) is bound by residues R40 and R46. Residues 138 to 140 (RAS) and 259 to 260 (QA) each bind FMN. Positions 275-284 (RRGSRAHDEM) are enriched in basic and acidic residues. Residues 275-308 (RRGSRAHDEMYPGTDGVVRSTNRAGGLEGGMTNG) form a disordered region. FMN is bound by residues G303, 318–322 (KPIST), and R344.

The protein belongs to the chorismate synthase family. In terms of assembly, homotetramer. FMNH2 is required as a cofactor.

The catalysed reaction is 5-O-(1-carboxyvinyl)-3-phosphoshikimate = chorismate + phosphate. It participates in metabolic intermediate biosynthesis; chorismate biosynthesis; chorismate from D-erythrose 4-phosphate and phosphoenolpyruvate: step 7/7. Functionally, catalyzes the anti-1,4-elimination of the C-3 phosphate and the C-6 proR hydrogen from 5-enolpyruvylshikimate-3-phosphate (EPSP) to yield chorismate, which is the branch point compound that serves as the starting substrate for the three terminal pathways of aromatic amino acid biosynthesis. This reaction introduces a second double bond into the aromatic ring system. This is Chorismate synthase from Mycobacterium ulcerans (strain Agy99).